The following is a 448-amino-acid chain: Beta-glucosidase B (448 aa).

Residue Glu167 is the Proton donor of the active site. Glu356 acts as the Nucleophile in catalysis.

It belongs to the glycosyl hydrolase 1 family.

It catalyses the reaction Hydrolysis of terminal, non-reducing beta-D-glucosyl residues with release of beta-D-glucose.. This chain is Beta-glucosidase B (bglB), found in Paenibacillus polymyxa (Bacillus polymyxa).